The sequence spans 494 residues: Hepatic triacylglycerol lipase (494 aa).

Residues 1 to 21 (MGNHLQISVSLVLCIFIQSSA) form the signal peptide. N-linked (GlcNAc...) asparagine glycosylation is present at N79. The active-site Nucleophile is S169. D195 (charge relay system) is an active-site residue. The interval 255–278 (CHFLELYKHIAEHGLNAITQTINC) is essential for determining substrate specificity. Residue H280 is the Charge relay system of the active site. Positions 353-487 (YHYQFKIQFI…HPTQEKVFVK (135 aa)) constitute a PLAT domain. N398 carries an N-linked (GlcNAc...) asparagine glycan.

Belongs to the AB hydrolase superfamily. Lipase family. In terms of assembly, homodimer.

It is found in the secreted. It carries out the reaction a triacylglycerol + H2O = a diacylglycerol + a fatty acid + H(+). The enzyme catalyses a 1-acyl-sn-glycero-3-phosphocholine + H2O = sn-glycerol 3-phosphocholine + a fatty acid + H(+). It catalyses the reaction a 1,2-diacyl-sn-glycero-3-phosphocholine + H2O = a 2-acyl-sn-glycero-3-phosphocholine + a fatty acid + H(+). The catalysed reaction is 1,2-di-(9Z-octadecenoyl)-sn-glycerol + H2O = 2-(9Z-octadecenoyl)-glycerol + (9Z)-octadecenoate + H(+). It carries out the reaction 1,2,3-tri-(9Z-octadecenoyl)-glycerol + H2O = 2,3-di-(9Z)-octadecenoyl-sn-glycerol + (9Z)-octadecenoate + H(+). The enzyme catalyses 1-(9Z-octadecenoyl)-sn-glycero-3-phospho-L-serine + H2O = sn-glycero-3-phospho-L-serine + (9Z)-octadecenoate + H(+). It catalyses the reaction 1-hexadecanoyl-sn-glycero-3-phosphocholine + H2O = sn-glycerol 3-phosphocholine + hexadecanoate + H(+). The catalysed reaction is 1,3-di-(9Z-octadecenoyl)-glycerol + H2O = 3-(9Z-octadecenoyl)-sn-glycerol + (9Z)-octadecenoate + H(+). It carries out the reaction 1,2,3-tri-(9Z-octadecenoyl)-glycerol + H2O = di-(9Z)-octadecenoylglycerol + (9Z)-octadecenoate + H(+). The enzyme catalyses 1,2-di-(9Z-octadecenoyl)-sn-glycero-3-phosphocholine + H2O = (9Z-octadecenoyl)-sn-glycero-3-phosphocholine + (9Z)-octadecenoate + H(+). It catalyses the reaction 1,2,3-tributanoylglycerol + H2O = dibutanoylglycerol + butanoate + H(+). The catalysed reaction is 1,2-dihexadecanoyl-sn-glycero-3-phosphocholine + H2O = hexadecanoyl-sn-glycero-3-phosphocholine + hexadecanoate + H(+). Phospholipase A1 and lysophospholipase activities are inhibited by annexin II. Catalyzes the hydrolysis of triglycerides and phospholipids present in circulating plasma lipoproteins, including chylomicrons, intermediate density lipoproteins (IDL), low density lipoproteins (LDL) of large size and high density lipoproteins (HDL), releasing free fatty acids (FFA) and smaller lipoprotein particles. Also exhibits lysophospholipase activity. Can hydrolyze both neutral lipid and phospholipid substrates but shows a greater binding affinity for neutral lipid substrates than phospholipid substrates. In native LDL, preferentially hydrolyzes the phosphatidylcholine species containing polyunsaturated fatty acids at sn-2 position. This is Hepatic triacylglycerol lipase (Lipc) from Rattus norvegicus (Rat).